The sequence spans 1351 residues: Serine-rich adhesin for platelets (1351 aa).

The first 89 residues, 1 to 89 (MSKRQKEFHD…VNMLHDQQAF (89 aa)), serve as a signal peptide directing secretion. The tract at residues 90 to 230 (AASDAPLTSE…KTSTTSTSTA (141 aa)) is serine-rich repeat region 1, SRR1. Residues 100–111 (LNTQSETVGNQN) are compositionally biased toward polar residues. Disordered stretches follow at residues 100-228 (LNTQ…TSTS) and 751-1323 (NSMS…GLLG). 2 stretches are compositionally biased toward low complexity: residues 112–133 (STTIEASTSTTDSTSVTKNSSS) and 149–228 (NVTS…TSTS). The tract at residues 231-751 (PIKLRTFSRL…TTFKYEVTRN (521 aa)) is non-repeat region (NRR). Residues 752–1294 (SMSDSVSTSG…SQSTLSATSE (543 aa)) are compositionally biased toward low complexity. The serine-rich repeat region 1, SRR1 stretch occupies residues 752-1312 (SMSDSVSTSG…AQSEKRLPDT (561 aa)). An LPXTG sorting signal motif is present at residues 1309-1313 (LPDTG). Residue Thr1312 is modified to Pentaglycyl murein peptidoglycan amidated threonine. A propeptide spans 1313–1351 (GDSIKQNGLLGGVMTLLVGLGLMKRKKKKDENDQDDSQA) (removed by sortase).

The protein belongs to the serine-rich repeat protein (SRRP) family. Proteolytically cleaved by a metalloprotease. Post-translationally, glycosylated. It is probable that most of the Ser residues in SSR1 and SSR2 are O-GlcNAcylated. Sequential glycosylation by sugar transferases are able to generate complex sugar polymorphisms.

The protein resides in the secreted. It is found in the cell wall. Functionally, mediates binding to human platelets, possibly through a receptor-ligand interaction. Probably associated with virulence in endovascular infection. The protein is Serine-rich adhesin for platelets (sasA) of Staphylococcus aureus (strain MRSA252).